The following is a 731-amino-acid chain: MGKGKNHDRKANPGFGKVKSKSGTSTGEFTLKRVKGENFYRDAKSAARVKMLNGGKAVRDRDGKIVEAAAFQKGEKEAEPGRVKPDRRWFGNTRVISQSALDHFRTALKEQKADPYSVLLKRNKLPMGLLQDDTKDSGSRPHIVETEPFGDTFGPKAQRKRPRLDIGSIEELGESSAAAATAAEAATAESQANGTADLADIYHPTTSTAREPIYAKGTSRRIWGELYKVLDSSDVVIHVLDARDPLGTRCKPVVEYLRKEKAHKHLVYVLNKVDLVPTWVTSGPYAYAYANGPARWVKHLSLSAPTIAFHASINNSFGKGSLIQLLRQFSVLHSDKKQISVGFIGYPNTGKSSIINTLKKKKVCTVAPIPGETKVWQYITLMRRIYLIDCPGIVPVSAKDSDTDTVLKGVVRVENLATPAEHIPALLERVRPEYLERTYNLEHVEGGWHGEQGATVILTAIAKKSGKLLKGGEPDQEAAAKMVLNDWIRGKIPFFVAPPAKSEPGAPTAATAAAATTTEAEKKKTEAEEQELAEERETMEILEEQERSLGKVLGIKRVKGVEQPISKIVTMTKFIGDDARRYVEEEEVVDQDKEMVEKEEEEEEEEDEDEDEEEEELAWEDVFPEEADAVDGGEEVEESDKEETDDEEDVDEEEAVPSAKQLGKRKAIDSDEEEQTANKSKRMTTNKQKATNFYTHANVKNRNRDRKVPKNPGKRSRGDDETTGKKAKKRR.

Disordered regions lie at residues 1-27 (MGKG…TSTG) and 130-162 (LQDD…RKRP). Basic and acidic residues predominate over residues 132–145 (DDTKDSGSRPHIVE). The region spanning 223 to 396 (WGELYKVLDS…LIDCPGIVPV (174 aa)) is the CP-type G domain. Residues 345-352 (GYPNTGKS) and 389-393 (DCPGI) contribute to the GTP site. 2 disordered regions span residues 517–541 (TTEA…TMEI) and 585–731 (EEEV…KKRR). Over residues 519–541 (EAEKKKTEAEEQELAEERETMEI) the composition is skewed to basic and acidic residues. The segment covering 597 to 655 (EKEEEEEEEEDEDEDEEEEELAWEDVFPEEADAVDGGEEVEESDKEETDDEEDVDEEEA) has biased composition (acidic residues). Residues 685–698 (TNKQKATNFYTHAN) show a composition bias toward polar residues. The span at 699–715 (VKNRNRDRKVPKNPGKR) shows a compositional bias: basic residues.

It belongs to the TRAFAC class YlqF/YawG GTPase family. NOG2 subfamily.

The protein localises to the nucleus. It is found in the nucleolus. GTPase that associates with pre-60S ribosomal subunits in the nucleolus and is required for their nuclear export and maturation. This Cryptococcus gattii (Filobasidiella gattii) protein is Nucleolar GTP-binding protein 2 (NOG2).